We begin with the raw amino-acid sequence, 290 residues long: Picrinine-N-methytransferase (290 aa).

The interval 71 to 80 (MLDVGCGIGG) is SAM motif I. Positions 133–139 (DGTFDLV) match the Vacuolar targeting signal motif. Residues 134–142 (GTFDLVFTI) form an SAM motif II region. The tract at residues 161-170 (VAAPGAPIVI) is SAM motif III.

It belongs to the class I-like SAM-binding methyltransferase superfamily. gTMT family. In terms of assembly, homodimer. In terms of tissue distribution, accumulates in tissues actively synthesizing monoterpenoid indole alkaloids (MIAs) (at protein level). Mainly expressed in young leaves and, to a lower extent, in roots and stems.

Its subcellular location is the vacuole membrane. The catalysed reaction is picrinine + S-adenosyl-L-methionine = ervincine + S-adenosyl-L-homocysteine + H(+). It functions in the pathway alkaloid biosynthesis; vindoline biosynthesis. Functionally, S-adenosyl-L-methionine-dependent N-methyltransferase involved in the biosynthesis of biologically active monoterpenoid indole alkaloids (MIAs) natural products including vindoline. Catalyzes the conversion of picrinine to N-methylpicrinine (ervincine). Also accepts, with low efficiency, 21-hydroxycyclolochnericine and norajmaline as substrates. This is Picrinine-N-methytransferase from Rauvolfia serpentina (Serpentine wood).